Here is a 223-residue protein sequence, read N- to C-terminus: Killer cell lectin-like receptor subfamily B member 1B allele C (223 aa).

At 1–45 the chain is on the cytoplasmic side; sequence MDTAVVYADLHLARTGEPKRESPPSLSPDTCQCPRWHRLALKLGC. The short motif at 5-10 is the ITIM motif element; the sequence is VVYADL. Residues 31 to 34 carry the LCK-binding motif motif; it reads CQCP. Residues 46-66 form a helical; Signal-anchor for type II membrane protein membrane-spanning segment; that stretch reads ACFILLVLSVIGLGVLVLTLL. Residues 67 to 223 are Extracellular-facing; the sequence is QKPLLQNSPA…LKRESTCNDS (157 aa). Residues 101–211 enclose the C-type lectin domain; sequence HRDKCFHVSQ…CDSDNIWICQ (111 aa). 2 disulfides stabilise this stretch: Cys-122-Cys-210 and Cys-189-Cys-202.

Homodimer; disulfide-linked. Interacts with tyrosine kinase LCK. Binds PTPN6/SHP-1 in a phosphorylation-dependent manner. Expressed in a subset of natural killer cells.

The protein resides in the membrane. In terms of biological role, receptor for CLEC2D/OCIL. Ligand-binding contributes to inhibition of cytotoxic natural killer (NK) cells. May mediate MHC class I-independent 'missing-self' recognition of allografts, tumor cells and virus-infected cells. In Rattus norvegicus (Rat), this protein is Killer cell lectin-like receptor subfamily B member 1B allele C.